We begin with the raw amino-acid sequence, 193 residues long: uncharacterized protein (193 aa).

Disordered regions lie at residues 1 to 21 (MPKGRRGSQSPTMSQRPAPPL), 53 to 96 (GAPA…PWPS), and 114 to 136 (SGPEAAASPLAPGPMTSRLASAS). Low complexity predominate over residues 53-70 (GAPAGGAPAAGGRSLPQG). Residues 71 to 95 (PSAPAPPPPPGLGPPSERPCPPPWP) show a composition bias toward pro residues. Residues 116-127 (PEAAASPLAPGP) are compositionally biased toward low complexity.

This is an uncharacterized protein from Bos taurus (Bovine).